Consider the following 138-residue polypeptide: MTALFLMSMLFGLTCGQAMSFCIPTEYTMHIERRECAYCLTINTTICAGYCMTRDINGKLFLPKYALSQDVCTYRDFIYRTVEIPGCPLHVAPYFSYPVALSCKCGKCNTDYSDCIHEAIKTNYCTKPQKSYLVGFSV.

The first 20 residues, 1–20, serve as a signal peptide directing secretion; it reads MTALFLMSMLFGLTCGQAMS. 6 disulfides stabilise this stretch: Cys-22–Cys-72, Cys-36–Cys-87, Cys-39–Cys-125, Cys-47–Cys-103, Cys-51–Cys-105, and Cys-108–Cys-115. Asn-43 carries N-linked (GlcNAc...) asparagine glycosylation. Residues 133–138 constitute a propeptide that is removed on maturation; sequence LVGFSV.

It belongs to the glycoprotein hormones subunit beta family. Heterodimer of a common alpha chain and a unique beta chain which confers biological specificity to thyrotropin, lutropin, follitropin and gonadotropin.

Its subcellular location is the secreted. In terms of biological role, indispensable for the control of thyroid structure and metabolism. This chain is Thyrotropin subunit beta (TSHB), found in Homo sapiens (Human).